Consider the following 456-residue polypeptide: Glycine--tRNA ligase (456 aa).

Positions 98 and 168 each coordinate substrate. Residues 200-202, 210-215, 285-286, and 329-332 contribute to the ATP site; these read RNE, FRTREF, EL, and GVER. Residue 215–219 participates in substrate binding; sequence FEQME. A substrate-binding site is contributed by 325–329; sequence EPSVG.

This sequence belongs to the class-II aminoacyl-tRNA synthetase family. In terms of assembly, homodimer.

The protein localises to the cytoplasm. The catalysed reaction is tRNA(Gly) + glycine + ATP = glycyl-tRNA(Gly) + AMP + diphosphate. Its function is as follows. Catalyzes the attachment of glycine to tRNA(Gly). This chain is Glycine--tRNA ligase, found in Mycoplasma capricolum subsp. capricolum (strain California kid / ATCC 27343 / NCTC 10154).